We begin with the raw amino-acid sequence, 340 residues long: Probable complex I intermediate-associated protein 30, mitochondrial (340 aa).

This sequence belongs to the CIA30 family.

It is found in the mitochondrion. Functionally, chaperone protein involved in the assembly of the mitochondrial NADH:ubiquinone oxidoreductase complex (complex I). Required for normal growth and reproduction. This is Probable complex I intermediate-associated protein 30, mitochondrial (nuaf-1) from Caenorhabditis briggsae.